A 202-amino-acid chain; its full sequence is Proteasome subunit beta 1 (202 aa).

A propeptide spans 1 to 8 (MGEVVLPG) (removed in mature form; by autocatalysis). Residue Thr-9 is the Nucleophile of the active site.

This sequence belongs to the peptidase T1B family. In terms of assembly, the 20S proteasome core is composed of 14 alpha and 14 beta subunits that assemble into four stacked heptameric rings, resulting in a barrel-shaped structure. The two inner rings, each composed of seven catalytic beta subunits, are sandwiched by two outer rings, each composed of seven alpha subunits. The catalytic chamber with the active sites is on the inside of the barrel. Has a gated structure, the ends of the cylinder being occluded by the N-termini of the alpha-subunits. Is capped at one or both ends by the proteasome regulatory ATPase, PAN.

It localises to the cytoplasm. The enzyme catalyses Cleavage of peptide bonds with very broad specificity.. Its activity is regulated as follows. The formation of the proteasomal ATPase PAN-20S proteasome complex, via the docking of the C-termini of PAN into the intersubunit pockets in the alpha-rings, triggers opening of the gate for substrate entry. Interconversion between the open-gate and close-gate conformations leads to a dynamic regulation of the 20S proteasome proteolysis activity. Component of the proteasome core, a large protease complex with broad specificity involved in protein degradation. The sequence is that of Proteasome subunit beta 1 from Desulfurococcus amylolyticus (strain DSM 18924 / JCM 16383 / VKM B-2413 / 1221n) (Desulfurococcus kamchatkensis).